We begin with the raw amino-acid sequence, 122 residues long: Large ribosomal subunit protein uL14 (122 aa).

The protein belongs to the universal ribosomal protein uL14 family. Part of the 50S ribosomal subunit. Forms a cluster with proteins L3 and L19. In the 70S ribosome, L14 and L19 interact and together make contacts with the 16S rRNA in bridges B5 and B8.

Its function is as follows. Binds to 23S rRNA. Forms part of two intersubunit bridges in the 70S ribosome. This Brucella abortus (strain 2308) protein is Large ribosomal subunit protein uL14.